Here is a 707-residue protein sequence, read N- to C-terminus: Glucose starvation modulator protein 1 (707 aa).

Residues 20–48 constitute a DNA-binding region (zn(2)-C6 fungal-type); that stretch reads CTFCHQKHLQCSNERPCKNCVKRNIADQC. 4 disordered regions span residues 63 to 122, 154 to 188, 260 to 283, and 385 to 404; these read NSKA…PNDL, QPTHTVASETSSSYSQVQPQHHPESSVPPSAPPES, DQQQSSSEATGTSASKAVPMGPSH, and NVSSRGNNNTSNQKLQSAIA. Low complexity-rich tracts occupy residues 66-79 and 91-104; these read AVAAATTPEATTTT and SPSISFPSSSISPI. Polar residues-rich tracts occupy residues 105–114 and 154–172; these read NTSTFDTNGH and QPTHTVASETSSSYSQVQP. The segment covering 178 to 188 has biased composition (low complexity); the sequence is SSVPPSAPPES. Residues 260-274 are compositionally biased toward polar residues; sequence DQQQSSSEATGTSAS. One can recognise a PAS domain in the interval 522-591; it reads DYEKLSQLNS…FQLFKSVAVG (70 aa). A compositionally biased stretch (low complexity) spans 621-652; it reads NYNNNYNHNYSHNNNNNNNSNNSNNNGMSTGA. The tract at residues 621–659 is disordered; sequence NYNNNYNHNYSHNNNNNNNSNNSNNNGMSTGAGNSGDGD.

It belongs to the ERT1/acuK family.

It is found in the nucleus. In terms of biological role, transcription factor which regulates nonfermentable carbon utilization. This Lodderomyces elongisporus (strain ATCC 11503 / CBS 2605 / JCM 1781 / NBRC 1676 / NRRL YB-4239) (Yeast) protein is Glucose starvation modulator protein 1 (GSM1).